A 167-amino-acid polypeptide reads, in one-letter code: Phosphopantetheine adenylyltransferase (167 aa).

Thr-9 contributes to the substrate binding site. ATP contacts are provided by residues 9-10 (TF) and His-17. Lys-41, Leu-73, and Arg-87 together coordinate substrate. Residues 88–90 (GLR), Glu-98, and 123–129 (YQFISGT) contribute to the ATP site.

It belongs to the bacterial CoaD family. In terms of assembly, homohexamer. It depends on Mg(2+) as a cofactor.

The protein localises to the cytoplasm. It catalyses the reaction (R)-4'-phosphopantetheine + ATP + H(+) = 3'-dephospho-CoA + diphosphate. It participates in cofactor biosynthesis; coenzyme A biosynthesis; CoA from (R)-pantothenate: step 4/5. Its function is as follows. Reversibly transfers an adenylyl group from ATP to 4'-phosphopantetheine, yielding dephospho-CoA (dPCoA) and pyrophosphate. In Ralstonia pickettii (strain 12J), this protein is Phosphopantetheine adenylyltransferase.